An 881-amino-acid polypeptide reads, in one-letter code: Alanine--tRNA ligase (881 aa).

Zn(2+) contacts are provided by H566, H570, C668, and H672.

Belongs to the class-II aminoacyl-tRNA synthetase family. Zn(2+) is required as a cofactor.

The protein localises to the cytoplasm. The catalysed reaction is tRNA(Ala) + L-alanine + ATP = L-alanyl-tRNA(Ala) + AMP + diphosphate. In terms of biological role, catalyzes the attachment of alanine to tRNA(Ala) in a two-step reaction: alanine is first activated by ATP to form Ala-AMP and then transferred to the acceptor end of tRNA(Ala). Also edits incorrectly charged Ser-tRNA(Ala) and Gly-tRNA(Ala) via its editing domain. The chain is Alanine--tRNA ligase from Frankia alni (strain DSM 45986 / CECT 9034 / ACN14a).